The chain runs to 196 residues: MCIQCIYARRQKRQHAGAPLAHTLRRTAHTRMPLLQEQQAAQERSVAVPGTEGKKAQNLRQLPAARLTYPTSSSTRPSHARETLYPVSGRQDSAFSFSRNTVQANTQKHKISYRNTTVCRDRDGGFMQQYSIKSDPGETSHCSIVSQTEDGYIIRICRDRDGYKKVHEVHIHQSLFDLCRRTGFITAVRQNTDAVA.

Residues 44–80 (RSVAVPGTEGKKAQNLRQLPAARLTYPTSSSTRPSHA) are disordered.

This is an uncharacterized protein from Treponema pallidum (strain Nichols).